The primary structure comprises 319 residues: tRNA-cytidine(32) 2-sulfurtransferase (319 aa).

Positions 43–48 (SGGKDS) match the PP-loop motif motif. The [4Fe-4S] cluster site is built by Cys-118, Cys-121, and Cys-209.

The protein belongs to the TtcA family. In terms of assembly, homodimer. Mg(2+) is required as a cofactor. [4Fe-4S] cluster serves as cofactor.

Its subcellular location is the cytoplasm. The catalysed reaction is cytidine(32) in tRNA + S-sulfanyl-L-cysteinyl-[cysteine desulfurase] + AH2 + ATP = 2-thiocytidine(32) in tRNA + L-cysteinyl-[cysteine desulfurase] + A + AMP + diphosphate + H(+). It participates in tRNA modification. Its function is as follows. Catalyzes the ATP-dependent 2-thiolation of cytidine in position 32 of tRNA, to form 2-thiocytidine (s(2)C32). The sulfur atoms are provided by the cysteine/cysteine desulfurase (IscS) system. The sequence is that of tRNA-cytidine(32) 2-sulfurtransferase from Neisseria meningitidis serogroup C / serotype 2a (strain ATCC 700532 / DSM 15464 / FAM18).